A 944-amino-acid chain; its full sequence is Protein translocase subunit SecA (944 aa).

Residues Gln87, 105-109, and Asp494 contribute to the ATP site; that span reads GEGKT. The interval 894-944 is disordered; the sequence is HAAAAGDGEEKPRPKQETVVRTQPKVGRNDPCPCGSGKKYKKCHGATEAAV. The segment covering 901-911 has biased composition (basic and acidic residues); sequence GEEKPRPKQET. The Zn(2+) site is built by Cys925, Cys927, Cys936, and His937.

The protein belongs to the SecA family. Monomer and homodimer. Part of the essential Sec protein translocation apparatus which comprises SecA, SecYEG and auxiliary proteins SecDF-YajC and YidC. The cofactor is Zn(2+).

It is found in the cell inner membrane. It localises to the cytoplasm. It catalyses the reaction ATP + H2O + cellular proteinSide 1 = ADP + phosphate + cellular proteinSide 2.. Part of the Sec protein translocase complex. Interacts with the SecYEG preprotein conducting channel. Has a central role in coupling the hydrolysis of ATP to the transfer of proteins into and across the cell membrane, serving as an ATP-driven molecular motor driving the stepwise translocation of polypeptide chains across the membrane. The polypeptide is Protein translocase subunit SecA (Anaeromyxobacter sp. (strain Fw109-5)).